Here is a 122-residue protein sequence, read N- to C-terminus: Small ribosomal subunit protein uS13 (122 aa).

The tract at residues 92–122 (HRMGLPVRGQRTKTNARTRKGPSKPVSGKKK) is disordered. A compositionally biased stretch (basic residues) spans 101 to 122 (QRTKTNARTRKGPSKPVSGKKK).

The protein belongs to the universal ribosomal protein uS13 family. Part of the 30S ribosomal subunit. Forms a loose heterodimer with protein S19. Forms two bridges to the 50S subunit in the 70S ribosome.

Located at the top of the head of the 30S subunit, it contacts several helices of the 16S rRNA. In the 70S ribosome it contacts the 23S rRNA (bridge B1a) and protein L5 of the 50S subunit (bridge B1b), connecting the 2 subunits; these bridges are implicated in subunit movement. Contacts the tRNAs in the A and P-sites. This chain is Small ribosomal subunit protein uS13, found in Ruminiclostridium cellulolyticum (strain ATCC 35319 / DSM 5812 / JCM 6584 / H10) (Clostridium cellulolyticum).